The following is a 291-amino-acid chain: Undecaprenyl-diphosphatase (291 aa).

Transmembrane regions (helical) follow at residues 1–21, 48–68, 102–122, 126–146, 162–182, 203–223, 231–251, and 267–287; these read MFII…LTEF, SAFT…AWVF, LHVL…DDFI, LFSV…MIIA, INYF…WPGF, SDFT…LSLL, IADI…GLIA, and FAIY…GFGI.

Belongs to the UppP family.

Its subcellular location is the cell membrane. It catalyses the reaction di-trans,octa-cis-undecaprenyl diphosphate + H2O = di-trans,octa-cis-undecaprenyl phosphate + phosphate + H(+). Functionally, catalyzes the dephosphorylation of undecaprenyl diphosphate (UPP). Confers resistance to bacitracin. This is Undecaprenyl-diphosphatase from Staphylococcus aureus (strain bovine RF122 / ET3-1).